The sequence spans 310 residues: Upstream stimulatory factor 1 (310 aa).

Polar residues predominate over residues 1–17 (MKGQQKTAETEEGTVQI). Disordered stretches follow at residues 1 to 26 (MKGQ…ATGE) and 171 to 209 (QGGS…EVER). A compositionally biased stretch (basic and acidic residues) spans 190–209 (EAPRTTRDEKRRAQHNEVER). The bHLH domain occupies 199–254 (KRRAQHNEVERRRRDKINNWIVQLSKIIPDCSMESTKSGQSKGGILSKACDYIQEL). The leucine-zipper stretch occupies residues 271–292 (LQLDNDVLRQQVEDLKNKNLLL). A Glycyl lysine isopeptide (Lys-Gly) (interchain with G-Cter in SUMO2) cross-link involves residue Lys306.

Efficient DNA binding requires dimerization with another bHLH protein. Binds DNA as a homodimer or a heterodimer (USF1/USF2).

It localises to the nucleus. Functionally, transcription factor that binds to a symmetrical DNA sequence (E-boxes) (5'-CACGTG-3') that is found in a variety of viral and cellular promoters. This chain is Upstream stimulatory factor 1 (Usf1), found in Mus musculus (Mouse).